Here is a 166-residue protein sequence, read N- to C-terminus: Lipoprotein signal peptidase (166 aa).

Helical transmembrane passes span 12 to 32, 70 to 90, and 102 to 122; these read WLWL…LILQ, WFFA…MYRS, and ALII…GFVV. Residues aspartate 123 and aspartate 141 contribute to the active site. The helical transmembrane segment at 137 to 157 threads the bilayer; it reads FNLADTAICIGAALIVLEGFL.

Belongs to the peptidase A8 family.

The protein resides in the cell inner membrane. The catalysed reaction is Release of signal peptides from bacterial membrane prolipoproteins. Hydrolyzes -Xaa-Yaa-Zaa-|-(S,diacylglyceryl)Cys-, in which Xaa is hydrophobic (preferably Leu), and Yaa (Ala or Ser) and Zaa (Gly or Ala) have small, neutral side chains.. The protein operates within protein modification; lipoprotein biosynthesis (signal peptide cleavage). Its function is as follows. This protein specifically catalyzes the removal of signal peptides from prolipoproteins. This is Lipoprotein signal peptidase from Salmonella typhi.